An 89-amino-acid polypeptide reads, in one-letter code: N.vectensis toxin 7 (89 aa).

An N-terminal signal peptide occupies residues 1-21 (MASFFKIAVICLVMLVVCSNA). 3 disulfides stabilise this stretch: Cys44-Cys77, Cys46-Cys69, and Cys62-Cys78.

In terms of tissue distribution, expressed in ectodermal gland cells.

Probable toxin. The sequence is that of N.vectensis toxin 7 from Nematostella vectensis (Starlet sea anemone).